A 483-amino-acid chain; its full sequence is MSGGGPSGGGPGGSGRARTSSFAEPGGGGGGGGGGPGGSASGPGGTGGGKASVGAMGGGVGASSSGGGPGGSGGGGSGGPGAGTSFPPPGVKLGRDSGKVTTVVATLGQGPERSQEVAYTDIKVIGNGSFGVVYQARLAETRELVAIKKVLQDKRFKNRELQIMRKLDHCNIVRLRYFFYSSGEKKDELYLNLVLEYVPETVYRVARHFTKAKLTIPILYVKVYMYQLFRSLAYIHSQGVCHRDIKPQNLLVDPDTAVLKLCDFGSAKQLVRGEPNVSYICSRYYRAPELIFGATDYTSSIDVWSAGCVLAELLLGQPIFPGDSGVDQLVEIIKVLGTPTREQIREMNPNYTEFKFPQIKAHPWTKVFKSRTPPEAIALCSSLLEYTPSSRLSPLEACAHSFFDELRCLGTQLPNNRPLPPLFNFSAGELSIQPSLNAILIPPHLRSPAGTTTLTPSSQALTETPTSSDWQSTDATPTLTNSS.

Over residues Met-1–Gly-15 the composition is skewed to gly residues. Residues Met-1–Asp-96 are disordered. Position 2 is an N-acetylserine (Ser-2). Ser-2 carries the phosphoserine modification. Position 21 is a phosphoserine; by PKB/AKT1 (Ser-21). Gly residues predominate over residues Pro-25–Ala-82. A phosphoserine mark is found at Ser-72, Ser-77, and Ser-97. Positions Tyr-119–Phe-403 constitute a Protein kinase domain. Residues Ile-125–Val-133 and Lys-148 contribute to the ATP site. Asp-244 acts as the Proton acceptor in catalysis. Tyr-279 carries the post-translational modification Phosphotyrosine. The disordered stretch occupies residues Ala-449–Ser-483.

Belongs to the protein kinase superfamily. CMGC Ser/Thr protein kinase family. GSK-3 subfamily. Monomer. Interacts with ARRB2. Interacts with AXIN1 and CTNNB1/beta-catenin. Interacts with CTNND2. Interacts with LMBR1L. Interacts with DDX3X. Interacts with TNFRSF10B. Interacts with RICTOR; the interaction results in phosphorylation of RICTOR at 'Thr-1695' by GSK3A which facilitates FBXW7-mediated ubiquitination and subsequent degradation of RICTOR. As to quaternary structure, (Microbial infection) Interacts with M.tuberculosis PtpA. In terms of processing, phosphorylated by AKT1 at Ser-21: upon insulin-mediated signaling, the activated PKB/AKT1 protein kinase phosphorylates and deactivates GSK3A, resulting in the dephosphorylation and activation of GYS1. Activated by phosphorylation at Tyr-279. Post-translationally, (Microbial infection) Dephosphorylated at Tyr-279 by M.tuberculosis PtpA, which leads to prevention of apoptosis during early stages of microbial infection.

It carries out the reaction L-seryl-[tau protein] + ATP = O-phospho-L-seryl-[tau protein] + ADP + H(+). The enzyme catalyses L-threonyl-[tau protein] + ATP = O-phospho-L-threonyl-[tau protein] + ADP + H(+). It catalyses the reaction L-seryl-[protein] + ATP = O-phospho-L-seryl-[protein] + ADP + H(+). The catalysed reaction is L-threonyl-[protein] + ATP = O-phospho-L-threonyl-[protein] + ADP + H(+). Activated by phosphorylation at Tyr-279. In response to insulin, inhibited by phosphorylation at Ser-21 by PKB/AKT1; phosphorylation at this site causes a conformational change, preventing access of substrates to the active site. Inhibited by lithium. In terms of biological role, constitutively active protein kinase that acts as a negative regulator in the hormonal control of glucose homeostasis, Wnt signaling and regulation of transcription factors and microtubules, by phosphorylating and inactivating glycogen synthase (GYS1 or GYS2), CTNNB1/beta-catenin, APC and AXIN1. Requires primed phosphorylation of the majority of its substrates. Contributes to insulin regulation of glycogen synthesis by phosphorylating and inhibiting GYS1 activity and hence glycogen synthesis. Regulates glycogen metabolism in liver, but not in muscle. May also mediate the development of insulin resistance by regulating activation of transcription factors. In Wnt signaling, regulates the level and transcriptional activity of nuclear CTNNB1/beta-catenin. Facilitates amyloid precursor protein (APP) processing and the generation of APP-derived amyloid plaques found in Alzheimer disease. May be involved in the regulation of replication in pancreatic beta-cells. Is necessary for the establishment of neuronal polarity and axon outgrowth. Through phosphorylation of the anti-apoptotic protein MCL1, may control cell apoptosis in response to growth factors deprivation. Acts as a regulator of autophagy by mediating phosphorylation of KAT5/TIP60 under starvation conditions which activates KAT5/TIP60 acetyltransferase activity and promotes acetylation of key autophagy regulators, such as ULK1 and RUBCNL/Pacer. Negatively regulates extrinsic apoptotic signaling pathway via death domain receptors. Promotes the formation of an anti-apoptotic complex, made of DDX3X, BRIC2 and GSK3B, at death receptors, including TNFRSF10B. The anti-apoptotic function is most effective with weak apoptotic signals and can be overcome by stronger stimulation. Phosphorylates mTORC2 complex component RICTOR at 'Thr-1695' which facilitates FBXW7-mediated ubiquitination and subsequent degradation of RICTOR. The polypeptide is Glycogen synthase kinase-3 alpha (GSK3A) (Homo sapiens (Human)).